Here is a 618-residue protein sequence, read N- to C-terminus: Uptake hydrogenase large subunit (618 aa).

The Ni(2+) site is built by C75, C78, C597, and C600.

Belongs to the [NiFe]/[NiFeSe] hydrogenase large subunit family. Heterodimer of a large and a small subunit. Ni(2+) serves as cofactor.

Its subcellular location is the cell membrane. The enzyme catalyses H2 + A = AH2. This enzyme recycles the H(2) produced by nitrogenase to increase the production of ATP and to protect nitrogenase against inhibition or damage by O(2) under carbon- or phosphate-limited conditions. In Rubrivivax gelatinosus (Rhodocyclus gelatinosus), this protein is Uptake hydrogenase large subunit (hupB).